A 421-amino-acid polypeptide reads, in one-letter code: 3-isopropylmalate dehydratase large subunit (421 aa).

Residues cysteine 302, cysteine 362, and cysteine 365 each contribute to the [4Fe-4S] cluster site.

This sequence belongs to the aconitase/IPM isomerase family. LeuC type 2 subfamily. In terms of assembly, heterodimer of LeuC and LeuD. Requires [4Fe-4S] cluster as cofactor.

The enzyme catalyses (2R,3S)-3-isopropylmalate = (2S)-2-isopropylmalate. It functions in the pathway amino-acid biosynthesis; L-leucine biosynthesis; L-leucine from 3-methyl-2-oxobutanoate: step 2/4. In terms of biological role, catalyzes the isomerization between 2-isopropylmalate and 3-isopropylmalate, via the formation of 2-isopropylmaleate. The protein is 3-isopropylmalate dehydratase large subunit of Campylobacter curvus (strain 525.92).